The following is a 444-amino-acid chain: Argininosuccinate synthase (444 aa).

Residues 18-26 (AFSGGLDTS) and A44 each bind ATP. L-citrulline is bound at residue Y100. Positions 130 and 132 each coordinate ATP. T132, N136, and D137 together coordinate L-aspartate. Residue N136 participates in L-citrulline binding. D137 contributes to the ATP binding site. L-citrulline is bound by residues R140 and S193. D195 lines the ATP pocket. Residues T202, E204, and E281 each contribute to the L-citrulline site.

This sequence belongs to the argininosuccinate synthase family. Type 2 subfamily. As to quaternary structure, homotetramer.

It localises to the cytoplasm. The enzyme catalyses L-citrulline + L-aspartate + ATP = 2-(N(omega)-L-arginino)succinate + AMP + diphosphate + H(+). The protein operates within amino-acid biosynthesis; L-arginine biosynthesis; L-arginine from L-ornithine and carbamoyl phosphate: step 2/3. This chain is Argininosuccinate synthase, found in Actinobacillus succinogenes (strain ATCC 55618 / DSM 22257 / CCUG 43843 / 130Z).